Reading from the N-terminus, the 111-residue chain is Prothymosin alpha (111 aa).

N-acetylmethionine is present on Met-1. The tract at residues 1 to 111 (MSDAAVDTSS…TKKQKTEEDD (111 aa)) is disordered. Ser-2 carries the N-acetylserine; in Prothymosin alpha, N-terminally processed modification. Position 2 is a phosphoserine (Ser-2). At Thr-8 the chain carries Phosphothreonine. Ser-9 and Ser-10 each carry phosphoserine. A phosphothreonine mark is found at Thr-13 and Thr-14. Over residues 13-31 (TTKDLKEKKEVVEEAENGR) the composition is skewed to basic and acidic residues. Residue Lys-15 is modified to N6-acetyllysine; alternate. An N6-succinyllysine; alternate modification is found at Lys-15. A compositionally biased stretch (acidic residues) spans 43 to 84 (ENGEQEADNEVDEEEEEGGEEEEEEEEGDGEEEDGDEDEEAE). Over residues 101-111 (DTKKQKTEEDD) the composition is skewed to basic and acidic residues. The residue at position 102 (Thr-102) is a Phosphothreonine. Position 103 is an N6-acetyllysine; alternate (Lys-103). Lys-103 is covalently cross-linked (Glycyl lysine isopeptide (Lys-Gly) (interchain with G-Cter in SUMO2); alternate). Thr-107 carries the phosphothreonine modification.

This sequence belongs to the pro/parathymosin family. Interacts with NUPR1; regulates apoptotic process. Covalently linked to a small RNA of about 20 nucleotides.

It is found in the nucleus. In terms of biological role, prothymosin alpha may mediate immune function by conferring resistance to certain opportunistic infections. This is Prothymosin alpha (Ptma) from Mus musculus (Mouse).